The chain runs to 284 residues: MTRNPVVAGMFYPAEYHELLEMIEYCYLNPRGPRELPSKRGKYTKPLGIVSPHAGYIYSGPVAAHGYKKISENISGEITAIILGPNHTGLGSGIATMKGTWKTPFGDMEIDNEFADRLWKECDILDMDENSHLREHSIEVQLPFLKHLEDLNIAKFKFVPISMMMQDYESCIDVGYVIAKVARELNRKIVIIASTDFSHYEPQEQASKKDAVVIKDILELNDEEIFTDVVTHTISMCGYGPVIAMVKAMKDLGARTSYLLYYSTSGDVTKDYSEVVGYASLLIK.

This sequence belongs to the MEMO1 family.

The chain is MEMO1 family protein MMP1387 from Methanococcus maripaludis (strain DSM 14266 / JCM 13030 / NBRC 101832 / S2 / LL).